A 514-amino-acid chain; its full sequence is 2,3-bisphosphoglycerate-independent phosphoglycerate mutase (514 aa).

The Mn(2+) site is built by aspartate 14 and serine 64. Residue serine 64 is the Phosphoserine intermediate of the active site. Substrate contacts are provided by residues histidine 125, 155–156 (RD), arginine 187, arginine 193, 263–266 (RADR), and lysine 336. Residues aspartate 403, histidine 407, aspartate 444, histidine 445, and histidine 463 each coordinate Mn(2+).

This sequence belongs to the BPG-independent phosphoglycerate mutase family. Monomer. Requires Mn(2+) as cofactor.

It carries out the reaction (2R)-2-phosphoglycerate = (2R)-3-phosphoglycerate. The protein operates within carbohydrate degradation; glycolysis; pyruvate from D-glyceraldehyde 3-phosphate: step 3/5. Functionally, catalyzes the interconversion of 2-phosphoglycerate and 3-phosphoglycerate. The protein is 2,3-bisphosphoglycerate-independent phosphoglycerate mutase of Escherichia coli O6:H1 (strain CFT073 / ATCC 700928 / UPEC).